The chain runs to 306 residues: UDP-N-acetylenolpyruvoylglucosamine reductase (306 aa).

The region spanning 34 to 199 (RVGGPAQLLF…TSVRLRGAIA (166 aa)) is the FAD-binding PCMH-type domain. Arg179 is a catalytic residue. Residue Ser228 is the Proton donor of the active site. Residue Glu298 is part of the active site.

It belongs to the MurB family. The cofactor is FAD.

Its subcellular location is the cytoplasm. It catalyses the reaction UDP-N-acetyl-alpha-D-muramate + NADP(+) = UDP-N-acetyl-3-O-(1-carboxyvinyl)-alpha-D-glucosamine + NADPH + H(+). The protein operates within cell wall biogenesis; peptidoglycan biosynthesis. Cell wall formation. This Rhodopseudomonas palustris (strain BisA53) protein is UDP-N-acetylenolpyruvoylglucosamine reductase.